The chain runs to 302 residues: Lysosomal thioesterase PPT2 (302 aa).

The N-terminal stretch at 1–27 (MPGLWRQRLPSAWALLLLPFLPLLLPA) is a signal peptide. N-linked (GlcNAc...) asparagine glycosylation is present at N60. 2 disulfides stabilise this stretch: C109-C117 and C165-C176. The active-site Nucleophile is S111. Residues N190 and N206 are each glycosylated (N-linked (GlcNAc...) asparagine). D228 is an active-site residue. A glycan (N-linked (GlcNAc...) asparagine) is linked at N245. Residues C276 and C296 are joined by a disulfide bond. The active site involves H283. An N-linked (GlcNAc...) asparagine glycan is attached at N289.

Belongs to the palmitoyl-protein thioesterase family.

It is found in the lysosome. The enzyme catalyses hexadecanoyl-CoA + H2O = hexadecanoate + CoA + H(+). It carries out the reaction S-hexadecanoyl-N-acetylcysteamine + H2O = N-acetylcysteamine + hexadecanoate + H(+). Catalyzes the cleavage of thioester bonds from S-palmitoyl-CoA or S-palmitoyl-N-acetylcysteamine (unbranched structures) but does not have activity against palmitoylcysteine or palmitoylated proteins, branched structures or bulky head groups. Conversely, hydrolyzes both long and short chain fatty acyl-CoA substrate. The polypeptide is Lysosomal thioesterase PPT2 (Ppt2) (Rattus norvegicus (Rat)).